The following is a 258-amino-acid chain: 2S seed storage albumin protein (258 aa).

Positions 1–24 (MAKLIPTIALVSVLLFIIANASFA) are cleaved as a signal peptide. Residues 25–35 (YRTTITTIEID) constitute a propeptide that is removed on maturation. Disulfide bonds link cysteine 49/cysteine 108, cysteine 61/cysteine 97, cysteine 98/cysteine 145, and cysteine 110/cysteine 149. Residues 64-87 (YLRQSSSRRSPGEEVLRMPGDENQ) are disordered. A Phosphoserine modification is found at serine 69. The segment covering 73 to 83 (SPGEEVLRMPG) has biased composition (basic and acidic residues). Positions 77 to 86 (EVLRMPGDEN) are excised as a propeptide. Glutamine 87 carries the post-translational modification Pyrrolidone carboxylic acid. 2 consecutive propeptides follow at residues 154-156 (RTN) and 191-193 (SDN). Disulfide bonds link cysteine 162-cysteine 212, cysteine 175-cysteine 201, cysteine 202-cysteine 249, and cysteine 214-cysteine 256. Glutamine 194 is modified (pyrrolidone carboxylic acid).

This sequence belongs to the 2S seed storage albumins family. In terms of assembly, the 2 mature proteins consist of heterodimers of a small and a large chain; disulfide-linked. In terms of processing, the N-terminus of both large chains is blocked. Post-translationally, the C-terminus of the allergen Ric c 1 and allergen Ric c 3 small chains are heterogeneous and the length of the chains can vary from 33 to 36 amino acids and from 36 to 40 amino acids respectively.

In terms of biological role, 2S seed storage proteins. The sequence is that of 2S seed storage albumin protein from Ricinus communis (Castor bean).